Here is a 209-residue protein sequence, read N- to C-terminus: ATP phosphoribosyltransferase (209 aa).

This sequence belongs to the ATP phosphoribosyltransferase family. Short subfamily. Heteromultimer composed of HisG and HisZ subunits.

The protein resides in the cytoplasm. It carries out the reaction 1-(5-phospho-beta-D-ribosyl)-ATP + diphosphate = 5-phospho-alpha-D-ribose 1-diphosphate + ATP. It functions in the pathway amino-acid biosynthesis; L-histidine biosynthesis; L-histidine from 5-phospho-alpha-D-ribose 1-diphosphate: step 1/9. Its function is as follows. Catalyzes the condensation of ATP and 5-phosphoribose 1-diphosphate to form N'-(5'-phosphoribosyl)-ATP (PR-ATP). Has a crucial role in the pathway because the rate of histidine biosynthesis seems to be controlled primarily by regulation of HisG enzymatic activity. The protein is ATP phosphoribosyltransferase of Caldicellulosiruptor saccharolyticus (strain ATCC 43494 / DSM 8903 / Tp8T 6331).